Reading from the N-terminus, the 268-residue chain is Glucosamine-6-phosphate deaminase (268 aa).

The active-site Proton acceptor; for enolization step is D72. Catalysis depends on D141, which acts as the For ring-opening step. H143 serves as the catalytic Proton acceptor; for ring-opening step. The active-site For ring-opening step is E148.

It belongs to the glucosamine/galactosamine-6-phosphate isomerase family. NagB subfamily.

The catalysed reaction is alpha-D-glucosamine 6-phosphate + H2O = beta-D-fructose 6-phosphate + NH4(+). Its pathway is amino-sugar metabolism; N-acetylneuraminate degradation; D-fructose 6-phosphate from N-acetylneuraminate: step 5/5. Allosterically activated by N-acetylglucosamine 6-phosphate (GlcNAc6P). Catalyzes the reversible isomerization-deamination of glucosamine 6-phosphate (GlcN6P) to form fructose 6-phosphate (Fru6P) and ammonium ion. In Borreliella afzelii (strain PKo) (Borrelia afzelii), this protein is Glucosamine-6-phosphate deaminase.